Reading from the N-terminus, the 176-residue chain is Cell division protein ZapC (176 aa).

This sequence belongs to the ZapC family. As to quaternary structure, interacts directly with FtsZ.

It is found in the cytoplasm. Its function is as follows. Contributes to the efficiency of the cell division process by stabilizing the polymeric form of the cell division protein FtsZ. Acts by promoting interactions between FtsZ protofilaments and suppressing the GTPase activity of FtsZ. This chain is Cell division protein ZapC, found in Pseudoalteromonas translucida (strain TAC 125).